The sequence spans 89 residues: Small ribosomal subunit protein uS15 (89 aa).

Belongs to the universal ribosomal protein uS15 family. Part of the 30S ribosomal subunit. Forms a bridge to the 50S subunit in the 70S ribosome, contacting the 23S rRNA.

Functionally, one of the primary rRNA binding proteins, it binds directly to 16S rRNA where it helps nucleate assembly of the platform of the 30S subunit by binding and bridging several RNA helices of the 16S rRNA. In terms of biological role, forms an intersubunit bridge (bridge B4) with the 23S rRNA of the 50S subunit in the ribosome. This Geobacillus sp. (strain WCH70) protein is Small ribosomal subunit protein uS15.